Consider the following 450-residue polypeptide: Glucose-6-phosphate isomerase (450 aa).

Position 39 is a phosphothreonine (threonine 39). Glutamate 291 acts as the Proton donor in catalysis. Catalysis depends on residues histidine 312 and lysine 426.

It belongs to the GPI family.

Its subcellular location is the cytoplasm. It catalyses the reaction alpha-D-glucose 6-phosphate = beta-D-fructose 6-phosphate. Its pathway is carbohydrate biosynthesis; gluconeogenesis. It participates in carbohydrate degradation; glycolysis; D-glyceraldehyde 3-phosphate and glycerone phosphate from D-glucose: step 2/4. In terms of biological role, catalyzes the reversible isomerization of glucose-6-phosphate to fructose-6-phosphate. This is Glucose-6-phosphate isomerase from Bacillus cereus (strain AH187).